We begin with the raw amino-acid sequence, 63 residues long: MKKRFSSYSLPPWVRQIRLVSAQVIIPITIFQGIRTIFFPTTFDVLLLAILIFLACALHLEWI.

A helical transmembrane segment spans residues 37 to 57; it reads IFFPTTFDVLLLAILIFLACA.

Its subcellular location is the cell membrane. This is an uncharacterized protein from Bacillus subtilis (strain 168).